Here is a 192-residue protein sequence, read N- to C-terminus: Phosphoheptose isomerase (192 aa).

One can recognise an SIS domain in the interval 36-192 (CVDSLAAGGK…DQVEAVAAPA (157 aa)). Position 51-53 (51-53 (NGG)) interacts with substrate. Zn(2+) contacts are provided by His60 and Glu64. Residues Glu64, 93–94 (ND), 119–121 (TTS), Ser124, and Gln171 contribute to the substrate site. Positions 171 and 179 each coordinate Zn(2+).

Belongs to the SIS family. GmhA subfamily. Homotetramer. Requires Zn(2+) as cofactor.

It localises to the cytoplasm. It carries out the reaction 2 D-sedoheptulose 7-phosphate = D-glycero-alpha-D-manno-heptose 7-phosphate + D-glycero-beta-D-manno-heptose 7-phosphate. It participates in carbohydrate biosynthesis; D-glycero-D-manno-heptose 7-phosphate biosynthesis; D-glycero-alpha-D-manno-heptose 7-phosphate and D-glycero-beta-D-manno-heptose 7-phosphate from sedoheptulose 7-phosphate: step 1/1. Functionally, catalyzes the isomerization of sedoheptulose 7-phosphate in D-glycero-D-manno-heptose 7-phosphate. The chain is Phosphoheptose isomerase from Paramagnetospirillum magneticum (strain ATCC 700264 / AMB-1) (Magnetospirillum magneticum).